We begin with the raw amino-acid sequence, 429 residues long: G2/mitotic-specific cyclin-B1 (429 aa).

The segment covering 1-14 has biased composition (polar residues); sequence MALRVTRNTKLNTE. Disordered regions lie at residues 1–21 and 71–128; these read MALRVTRNTKLNTENKAKVSM and TGKV…PMET. K73 is modified (N6-acetyllysine). The segment covering 92–106 has biased composition (acidic residues); that stretch reads PEVELAEPEPEPEPV. S122 carries the phosphoserine; by CDK1 modification. At S124 the chain carries Phosphoserine. The residue at position 129 (S129) is a Phosphoserine; by PLK1. Position 143 is a phosphoserine (S143). Interaction with CDK2 stretches follow at residues 165 to 173 and 254 to 257; these read EYVKDIYAY and YEEM. The residue at position 317 (T317) is a Phosphothreonine.

It belongs to the cyclin family. Cyclin AB subfamily. Interacts with the CDC2 protein kinase to form a serine/threonine kinase holoenzyme complex also known as maturation promoting factor (MPF). The cyclin subunit imparts substrate specificity to the complex. Binds HEI10. Interacts with catalytically active RALBP1 and CDC2 during mitosis to form an endocytotic complex during interphase. Interacts with CCNF; interaction is required for nuclear localization. Interacts with CDK5RAP3. Interacts with RFPL4A and UBE2A. Interacts with INCA1. In terms of processing, ubiquitinated by the SCF(NIPA) complex during interphase, leading to its destruction. Not ubiquitinated during G2/M phases. Phosphorylated by PLK1 at Ser-129 on centrosomes during prophase: phosphorylation by PLK1 does not cause nuclear import. Phosphorylation at Ser-143 was also reported to be mediated by PLK1 but Ser-129 seems to be the primary phosphorylation site.

Its subcellular location is the cytoplasm. The protein localises to the nucleus. It is found in the cytoskeleton. It localises to the microtubule organizing center. The protein resides in the centrosome. Its function is as follows. Essential for the control of the cell cycle at the G2/M (mitosis) transition. The protein is G2/mitotic-specific cyclin-B1 (CCNB1) of Cricetulus griseus (Chinese hamster).